The sequence spans 530 residues: PTS system maltose-specific EIICB component (530 aa).

The 431-residue stretch at 1-431 folds into the PTS EIIC type-1 domain; it reads MTAKTAPKVT…FNLKTPGRDS (431 aa). Transmembrane regions (helical) follow at residues 22 to 42, 69 to 89, 96 to 116, 138 to 158, 189 to 209, 289 to 309, 321 to 341, 343 to 363, 369 to 389, and 399 to 419; these read FMLP…GSSL, IGSF…PLGL, VAAF…NFWL, ILGI…GIIV, LVMG…AMGI, FLSQ…ALAM, IKGL…TEPL, FLFL…TGLG, VLGV…VFGI, and MVPV…RFAI. A PTS EIIB type-1 domain is found at 449–530; it reads GYNVPAILEA…MAGLMHTVQA (82 aa). The active-site Phosphocysteine intermediate; for EIIB activity is the cysteine 471.

The protein resides in the cell inner membrane. It catalyses the reaction D-maltose(out) + N(pros)-phospho-L-histidyl-[protein] = alpha-maltose 6'-phosphate(in) + L-histidyl-[protein]. Its function is as follows. The phosphoenolpyruvate-dependent sugar phosphotransferase system (sugar PTS), a major carbohydrate active transport system, catalyzes the phosphorylation of incoming sugar substrates concomitantly with their translocation across the cell membrane. This system is involved in maltose transport. MalX can also recognize and transport glucose even though this sugar may not represent the natural substrate of the system. In Escherichia coli (strain K12), this protein is PTS system maltose-specific EIICB component.